Reading from the N-terminus, the 80-residue chain is Conotoxin Vi6.2 (80 aa).

The signal sequence occupies residues 1-22 (MKLTCVLITTVLFLTASQLITA). A propeptide spanning residues 23-47 (DYSRDKRQYRAVRLRDEMRNFKGAR) is cleaved from the precursor. Disulfide bonds link C49–C62, C56–C67, and C61–C77. 4-hydroxyproline occurs at positions 60 and 63.

This sequence belongs to the conotoxin O1 superfamily. Expressed by the venom duct.

It is found in the secreted. Its function is as follows. Ion channel inhibitor that inhibits the increase in intracellular calcium upon depolarization in DRG neurons. In vivo, both intraperitoneal and intracranial injections into mice induce hyperactivity. The sequence is that of Conotoxin Vi6.2 from Conus virgo (Virgin cone).